Here is a 545-residue protein sequence, read N- to C-terminus: Chaperonin GroEL (545 aa).

ATP contacts are provided by residues 29 to 32 (TLGP), Lys50, 86 to 90 (DGTTT), Gly413, and Asp495.

This sequence belongs to the chaperonin (HSP60) family. Forms a cylinder of 14 subunits composed of two heptameric rings stacked back-to-back. Interacts with the co-chaperonin GroES.

The protein localises to the cytoplasm. It catalyses the reaction ATP + H2O + a folded polypeptide = ADP + phosphate + an unfolded polypeptide.. Its function is as follows. Together with its co-chaperonin GroES, plays an essential role in assisting protein folding. The GroEL-GroES system forms a nano-cage that allows encapsulation of the non-native substrate proteins and provides a physical environment optimized to promote and accelerate protein folding. The protein is Chaperonin GroEL of Borrelia garinii subsp. bavariensis (strain ATCC BAA-2496 / DSM 23469 / PBi) (Borreliella bavariensis).